The following is a 602-amino-acid chain: Cholinesterase (602 aa).

Positions 1–28 (MQSKGTIISIQFLLRFLLLWVLIGKSHT) are cleaved as a signal peptide. N85 carries N-linked (GlcNAc...) asparagine glycosylation. C93 and C120 are oxidised to a cystine. An N-linked (GlcNAc...) asparagine glycan is attached at N134. 144-145 (GG) serves as a coordination point for substrate. The active-site Acyl-ester intermediate is S226. S226 is subject to Phosphoserine. N-linked (GlcNAc...) asparagine glycans are attached at residues N269 and N284. Cysteines 280 and 291 form a disulfide. Catalysis depends on E353, which acts as the Charge relay system. N369 carries N-linked (GlcNAc...) asparagine glycosylation. Cysteines 428 and 547 form a disulfide. Residue H466 is the Charge relay system of the active site. N-linked (GlcNAc...) asparagine glycosylation is found at N483, N509, N513, and N514.

The protein belongs to the type-B carboxylesterase/lipase family. Homotetramer; disulfide-linked. Dimer of dimers.

The protein resides in the secreted. It carries out the reaction an acylcholine + H2O = a carboxylate + choline + H(+). Esterase with broad substrate specificity. Contributes to the inactivation of the neurotransmitter acetylcholine. Can degrade neurotoxic organophosphate esters. In Panthera tigris tigris (Bengal tiger), this protein is Cholinesterase (BCHE).